The chain runs to 193 residues: ATP-dependent protease subunit HslV (193 aa).

Thr12 is a catalytic residue. Residues Ala167, Cys170, and Thr173 each contribute to the Na(+) site.

This sequence belongs to the peptidase T1B family. HslV subfamily. As to quaternary structure, a double ring-shaped homohexamer of HslV is capped on each side by a ring-shaped HslU homohexamer. The assembly of the HslU/HslV complex is dependent on binding of ATP.

It localises to the cytoplasm. It catalyses the reaction ATP-dependent cleavage of peptide bonds with broad specificity.. Allosterically activated by HslU binding. Functionally, protease subunit of a proteasome-like degradation complex believed to be a general protein degrading machinery. The polypeptide is ATP-dependent protease subunit HslV (Bartonella quintana (strain Toulouse) (Rochalimaea quintana)).